A 1740-amino-acid chain; its full sequence is SH3 and multiple ankyrin repeat domains protein 3 (1740 aa).

An intramolecular interaction with the ANK repeats region spans residues 1–75 (MDGPGASAVV…KFLDEERLLQ (75 aa)). The residue at position 122 (Y122) is a Phosphotyrosine. 6 ANK repeats span residues 148 to 181 (SGEC…FRTR), 182 to 214 (DGLT…YKDS), 215 to 245 (RGLT…QLGT), 249 to 278 (NGWQ…NMGA), 282 to 311 (SGNT…NKDV), and 315 to 345 (NSQT…DVVP). The segment at 354–466 (KRRRLAGPSG…PPPRGPKRKL (113 aa)) is disordered. Residues S373, S375, S387, and S394 each carry the phosphoserine modification. The segment covering 404-415 (LQEEKDRDRDGE) has biased composition (basic and acidic residues). Residues 444-460 (APGPGPASPAPPAPPPR) are compositionally biased toward pro residues. Residues 470 to 529 (VPGRKFIAVKAHSPQGEGEIPLHRGEAVKVLSIGEGGFWEGTVKGRTGWFPADCVEEVQM) form the SH3 domain. S482 carries the post-translational modification Phosphoserine. The residue at position 555 (Y555) is a Phosphotyrosine. A PDZ domain is found at 570-664 (VAILQKRDHE…RLVMKVVSVT (95 aa)). Residues 664 to 687 (TRKPEEDSARRRAPPPPKRAPSTT) form a disordered region. Positions 677 to 684 (PPPPKRAP) are required for interaction with ABI1. Phosphoserine occurs at positions 694, 781, 790, and 801. Disordered regions lie at residues 759-855 (RQGL…RSSF), 868-1053 (AGLY…QPSR), 1115-1199 (AARE…MILS), 1211-1463 (LIVV…GPAR), and 1476-1518 (GDPV…EPVG). Positions 812 to 845 (IPPPPQTAPPPPPAPYYFDSGPPPTFSPPPPPPG) are enriched in pro residues. Phosphoserine is present on residues S891 and S898. Position 913 is a phosphothreonine (T913). A Phosphotyrosine modification is found at Y931. R966 carries the asymmetric dimethylarginine modification. A compositionally biased stretch (basic and acidic residues) spans 1017–1027 (VKERRLEERRR). Over residues 1123 to 1132 (SQTPSRSPTP) the composition is skewed to polar residues. T1131 carries the post-translational modification Phosphothreonine. 4 positions are modified to phosphoserine: S1135, S1160, S1164, and S1167. The segment covering 1175-1195 (ARREAEKPTREERKSPEDKKS) has biased composition (basic and acidic residues). Phosphothreonine is present on T1235. 2 stretches are compositionally biased toward pro residues: residues 1252–1262 (MPSPRAQPPGS) and 1322–1334 (TPPP…PTTV). At S1254 the chain carries Phosphoserine. The span at 1335 to 1344 (PSPASGKPSS) shows a compositional bias: low complexity. Basic and acidic residues predominate over residues 1361–1371 (ADTRSSSDPHL). A compositionally biased stretch (low complexity) spans 1372-1393 (ETTSTISTVSSMSTLSSESGEL). The SH3-binding signature appears at 1411–1417 (PPVPPKP). Phosphoserine is present on S1421. Residues 1495–1515 (ISELSSRLQQLNKDTRSLGEE) are a coiled coil. Positions 1496-1506 (SELSSRLQQLN) are enriched in polar residues. S1511, S1522, S1530, and S1549 each carry phosphoserine. Disordered stretches follow at residues 1556-1594 (ISAQ…PASL) and 1637-1673 (VRSV…QQKP). The span at 1637–1647 (VRSVSARSRSP) shows a compositional bias: low complexity. Residues S1644, S1646, and S1648 each carry the phosphoserine modification. The span at 1648-1658 (SPSPLPSPSPG) shows a compositional bias: pro residues. Residues 1659–1668 (SGPSAGPRRP) are compositionally biased toward low complexity. Residues 1677 to 1740 (WSKFDVGDWL…ERALRQLDGS (64 aa)) form the SAM domain.

The protein belongs to the SHANK family. May homomultimerize via its SAM domain. Interacts with BAIAP2, DBNL and SLC17A7/VGLUT1. Interacts with DLGAP1/GKAP, GRM1/MGLUR1, GRM5/MGLUR5 and LZTS3 C-termini via its PDZ domain. Interacts with ABI1, HOMER1, HOMER2, HOMER3 and CTTN/cortactin SH3 domain. Is part of a complex with DLG4/PSD-95 and DLGAP1/GKAP. Interacts (via PDZ domain) with the GRIA1 subunit of the AMPA receptor (via PDZ-binding motif). Interacts with WASF1 and CYFIP2; the interactions mediate the association of SHANK3 with the WAVE1 complex. Interacts with ARPC2; the interaction probably mediates the association of SHANK3 with the Arp2/3 complex. Interacts (via ANK repeats) with SHARPIN and SPTAN1. Interacts (via PDZ domain) with ARHGAP44 (probably via PDZ-binding motif); the interaction takes place in dendritic spines and promotes GRIA1 exocytosis. Interacts with CAMK2A. Interacts with DIP2A. Interacts with ADGRL3. Widely expressed in brain (at protein level).

It localises to the cytoplasm. It is found in the postsynaptic density. The protein resides in the cell projection. The protein localises to the dendritic spine. Major scaffold postsynaptic density protein which interacts with multiple proteins and complexes to orchestrate the dendritic spine and synapse formation, maturation and maintenance. Interconnects receptors of the postsynaptic membrane including NMDA-type and metabotropic glutamate receptors via complexes with GKAP/PSD-95 and HOMER, respectively, and the actin-based cytoskeleton. Plays a role in the structural and functional organization of the dendritic spine and synaptic junction through the interaction with Arp2/3 and WAVE1 complex as well as the promotion of the F-actin clusters. By way of this control of actin dynamics, participates in the regulation of developing neurons growth cone motility and the NMDA receptor-signaling. Also modulates GRIA1 exocytosis and GRM5/MGLUR5 expression and signaling to control the AMPA and metabotropic glutamate receptor-mediated synaptic transmission and plasticity. May be required at an early stage of synapse formation and be inhibited by IGF1 to promote synapse maturation. This Rattus norvegicus (Rat) protein is SH3 and multiple ankyrin repeat domains protein 3 (Shank3).